Reading from the N-terminus, the 130-residue chain is Bet1-like SNARE 1-2 (130 aa).

Residues 1-106 (MNFRRENRAS…EKKSNRKSCK (106 aa)) are Cytoplasmic-facing. A t-SNARE coiled-coil homology domain is found at 33–95 (AHDERDNDEA…SGTINRFKLV (63 aa)). Residues 40-82 (DEALENLQDRVSFLKRVTGDIHEEVENHNRLLDKVGNKMDSAR) are a coiled coil. The helical; Anchor for type IV membrane protein transmembrane segment at 107-122 (LIAYFVLLFLIMYYLI) threads the bilayer. The Vesicular segment spans residues 123 to 130 (RLLNYIKG).

Belongs to the BET1 family.

It localises to the golgi apparatus membrane. The protein resides in the endoplasmic reticulum membrane. Its function is as follows. Required for vesicular transport from the ER to the Golgi complex. Functions as a SNARE associated with ER-derived vesicles. The sequence is that of Bet1-like SNARE 1-2 (BET12) from Arabidopsis thaliana (Mouse-ear cress).